The following is a 251-amino-acid chain: Triosephosphate isomerase (251 aa).

Residue Asn-9 to Lys-11 coordinates substrate. His-95 (electrophile) is an active-site residue. The Proton acceptor role is filled by Glu-167. Residues Gly-173, Ser-212, and Gly-233–Gly-234 contribute to the substrate site.

This sequence belongs to the triosephosphate isomerase family. In terms of assembly, homodimer.

Its subcellular location is the cytoplasm. The enzyme catalyses D-glyceraldehyde 3-phosphate = dihydroxyacetone phosphate. It participates in carbohydrate biosynthesis; gluconeogenesis. The protein operates within carbohydrate degradation; glycolysis; D-glyceraldehyde 3-phosphate from glycerone phosphate: step 1/1. Its function is as follows. Involved in the gluconeogenesis. Catalyzes stereospecifically the conversion of dihydroxyacetone phosphate (DHAP) to D-glyceraldehyde-3-phosphate (G3P). The chain is Triosephosphate isomerase from Pseudomonas aeruginosa (strain LESB58).